The chain runs to 213 residues: Histone H1.2 (213 aa).

Residues 1 to 17 (MSETAPAAPAAAPPAEK) show a composition bias toward low complexity. A disordered region spans residues 1–41 (MSETAPAAPAAAPPAEKAPVKKKAAKKAGGTPRKASGPPVS). Ser-2 is subject to N-acetylserine; partial. Ser-2 is modified (phosphoserine). Lys-17 carries the N6-acetyllysine modification. Residues Lys-23, Lys-26, and Lys-27 each carry the N6-(2-hydroxyisobutyryl)lysine modification. Residue Lys-34 is modified to N6-(beta-hydroxybutyryl)lysine; alternate. Lys-34 is modified (N6-crotonyllysine; alternate). Lys-34 bears the N6-methyllysine; alternate mark. One can recognise an H15 domain in the interval 36 to 109 (SGPPVSELIT…GASGSFKLNK (74 aa)). Position 46 is an N6-(2-hydroxyisobutyryl)lysine (Lys-46). An N6-(beta-hydroxybutyryl)lysine; alternate modification is found at Lys-52. Lys-52 carries the post-translational modification N6-(2-hydroxyisobutyryl)lysine; alternate. Arg-54 is subject to Citrulline. The residue at position 63 (Lys-63) is an N6-(2-hydroxyisobutyryl)lysine. At Lys-64 the chain carries N6-(beta-hydroxybutyryl)lysine; alternate. N6-crotonyllysine; alternate is present on Lys-64. Lys-64 is modified (N6-(2-hydroxyisobutyryl)lysine; alternate). N6-(2-hydroxyisobutyryl)lysine is present on residues Lys-75 and Lys-81. N6-(beta-hydroxybutyryl)lysine; alternate occurs at positions 85 and 90. N6-crotonyllysine; alternate is present on residues Lys-85, Lys-90, and Lys-97. N6-(2-hydroxyisobutyryl)lysine; alternate occurs at positions 85, 90, and 97. Residues 92-213 (TLVQTKGTGA…KPKKAAPKKK (122 aa)) are disordered. An N6-succinyllysine; alternate modification is found at Lys-97. Ser-104 bears the Phosphoserine; by PKC mark. Lys-106 bears the N6-(beta-hydroxybutyryl)lysine mark. N6-(2-hydroxyisobutyryl)lysine is present on residues Lys-110, Lys-117, Lys-121, Lys-129, and Lys-136. Over residues 119-140 (KVKKAGGTKPKKPVGAAKKPKK) the composition is skewed to basic residues. Residue Thr-146 is modified to Phosphothreonine. Lys-148 is modified (N6-(2-hydroxyisobutyryl)lysine). Positions 149–160 (KSAKKTPKKAKK) are enriched in basic residues. 2 positions are modified to N6-crotonyllysine; alternate: Lys-159 and Lys-168. An N6-(2-hydroxyisobutyryl)lysine; alternate mark is found at Lys-159 and Lys-168. Basic residues predominate over residues 169 to 186 (KVAKSPKKAKVAKPKKAA). N6-methyllysine; by EHMT1 and EHMT2 is present on Lys-187. The residue at position 188 (Ser-188) is an ADP-ribosylserine. Residues 193 to 213 (VKPKAAKPKVVKPKKAAPKKK) show a composition bias toward basic residues. An N6-(2-hydroxyisobutyryl)lysine modification is found at Lys-213.

It belongs to the histone H1/H5 family. As to quaternary structure, interacts with TSC22D1 isoforms 2 and 5. H1 histones are progressively phosphorylated during the cell cycle, becoming maximally phosphorylated during late G2 phase and M phase, and being dephosphorylated sharply thereafter. In terms of processing, crotonylation (Kcr) is specifically present in male germ cells and marks testis-specific genes in post-meiotic cells, including X-linked genes that escape sex chromosome inactivation in haploid cells. Crotonylation marks active promoters and enhancers and confers resistance to transcriptional repressors. It is also associated with post-meiotically activated genes on autosomes. Post-translationally, citrullination at Arg-54 (H1R54ci) by PADI4 takes place within the DNA-binding site of H1 and results in its displacement from chromatin and global chromatin decondensation, thereby promoting pluripotency and stem cell maintenance. ADP-ribosylated on Ser-188 in response to DNA damage.

The protein localises to the nucleus. It is found in the chromosome. Functionally, histone H1 protein binds to linker DNA between nucleosomes forming the macromolecular structure known as the chromatin fiber. Histones H1 are necessary for the condensation of nucleosome chains into higher-order structured fibers. Also acts as a regulator of individual gene transcription through chromatin remodeling, nucleosome spacing and DNA methylation. This Homo sapiens (Human) protein is Histone H1.2.